The sequence spans 361 residues: Homocitrate synthase (361 aa).

Residues 1–249 enclose the Pyruvate carboxyltransferase domain; the sequence is MILDSTLREG…VKKYRLDKLY (249 aa). Residue R8 participates in 2-oxoglutarate binding. Residue E9 coordinates Mg(2+). Residues H68, R128, and T162 each coordinate 2-oxoglutarate. Mg(2+)-binding residues include H188 and H190. H282 (proton acceptor) is an active-site residue.

The protein belongs to the alpha-IPM synthase/homocitrate synthase family. Homocitrate synthase LYS20/LYS21 subfamily. The cofactor is Mg(2+). Requires Mn(2+) as cofactor.

The catalysed reaction is acetyl-CoA + 2-oxoglutarate + H2O = (2R)-homocitrate + CoA + H(+). It participates in amino-acid biosynthesis; L-lysine biosynthesis via AAA pathway; L-alpha-aminoadipate from 2-oxoglutarate: step 1/5. In terms of biological role, catalyzes the aldol-type condensation of 2-oxoglutarate with acetyl-CoA to yield homocitrate. Carries out the first step of the alpha-aminoadipate (AAA) lysine biosynthesis pathway. The polypeptide is Homocitrate synthase (Pyrococcus horikoshii (strain ATCC 700860 / DSM 12428 / JCM 9974 / NBRC 100139 / OT-3)).